The chain runs to 625 residues: Phosphomethylpyrimidine synthase (625 aa).

Substrate-binding positions include N230, M259, Y288, H324, 344-346 (SRG), 385-388 (DGLR), and E424. H428 contacts Zn(2+). A substrate-binding site is contributed by Y451. Zn(2+) is bound at residue H492. The [4Fe-4S] cluster site is built by C572, C575, and C580.

Belongs to the ThiC family. As to quaternary structure, homodimer. [4Fe-4S] cluster is required as a cofactor.

It carries out the reaction 5-amino-1-(5-phospho-beta-D-ribosyl)imidazole + S-adenosyl-L-methionine = 4-amino-2-methyl-5-(phosphooxymethyl)pyrimidine + CO + 5'-deoxyadenosine + formate + L-methionine + 3 H(+). The protein operates within cofactor biosynthesis; thiamine diphosphate biosynthesis. Catalyzes the synthesis of the hydroxymethylpyrimidine phosphate (HMP-P) moiety of thiamine from aminoimidazole ribotide (AIR) in a radical S-adenosyl-L-methionine (SAM)-dependent reaction. In Xanthomonas axonopodis pv. citri (strain 306), this protein is Phosphomethylpyrimidine synthase.